Consider the following 368-residue polypeptide: tRNA-specific 2-thiouridylase MnmA (368 aa).

Residues 12–19 (GMSGGVDS) and Met38 each bind ATP. The tract at residues 98 to 100 (NPD) is interaction with target base in tRNA. Cys103 acts as the Nucleophile in catalysis. A disulfide bridge links Cys103 with Cys200. An ATP-binding site is contributed by Gly128. The segment at 150-152 (KDQ) is interaction with tRNA. The Cysteine persulfide intermediate role is filled by Cys200. The segment at 311–312 (RY) is interaction with tRNA.

The protein belongs to the MnmA/TRMU family.

Its subcellular location is the cytoplasm. It catalyses the reaction S-sulfanyl-L-cysteinyl-[protein] + uridine(34) in tRNA + AH2 + ATP = 2-thiouridine(34) in tRNA + L-cysteinyl-[protein] + A + AMP + diphosphate + H(+). In terms of biological role, catalyzes the 2-thiolation of uridine at the wobble position (U34) of tRNA, leading to the formation of s(2)U34. This is tRNA-specific 2-thiouridylase MnmA from Aeromonas hydrophila subsp. hydrophila (strain ATCC 7966 / DSM 30187 / BCRC 13018 / CCUG 14551 / JCM 1027 / KCTC 2358 / NCIMB 9240 / NCTC 8049).